Here is a 620-residue protein sequence, read N- to C-terminus: Probable potassium transport system protein Kup 1 (620 aa).

Transmembrane regions (helical) follow at residues 10–30, 50–70, 102–122, 138–158, 168–188, 211–231, 246–266, 284–304, 336–356, 368–388, 393–413, and 415–435; these read LLIS…LYAL, VLSL…VIVI, MLLG…TPAI, LTPY…MIQK, FGPV…VNIV, MMSF…EALY, WFAL…ALLL, MVVP…QAVI, IYIP…VIGF, IAVT…MALM, WIAV…FFFA, and IIKV…SFTV.

It belongs to the HAK/KUP transporter (TC 2.A.72) family.

The protein localises to the cell inner membrane. It carries out the reaction K(+)(in) + H(+)(in) = K(+)(out) + H(+)(out). Functionally, transport of potassium into the cell. Likely operates as a K(+):H(+) symporter. In Rhodopseudomonas palustris (strain BisB18), this protein is Probable potassium transport system protein Kup 1.